Here is a 258-residue protein sequence, read N- to C-terminus: MGVERIKAAFENGKKAFIPYVMGGDGGLEILKERIRFLDEAGASIVEIGIPFSDPVADGPTIQRAGKRALDSGVTVKGIFQALIEVRKEVQIPFVLMTYLNPVLAFGKERFIENCMEAGVDGIIVPDLPYEEQDIIAPLLREANIALIPLVTVTSPIERIKKITSESEGFVYAVTVAGVTGVRQNFKDEIHSYLEKVKSHTHLPVVAGFGISTKEHVEEMVTICDGVVVGSKVIELLENEKREEICEFIQATKQKEEA.

Active-site proton acceptor residues include glutamate 47 and aspartate 58.

It belongs to the TrpA family. Tetramer of two alpha and two beta chains.

It catalyses the reaction (1S,2R)-1-C-(indol-3-yl)glycerol 3-phosphate + L-serine = D-glyceraldehyde 3-phosphate + L-tryptophan + H2O. It functions in the pathway amino-acid biosynthesis; L-tryptophan biosynthesis; L-tryptophan from chorismate: step 5/5. In terms of biological role, the alpha subunit is responsible for the aldol cleavage of indoleglycerol phosphate to indole and glyceraldehyde 3-phosphate. This is Tryptophan synthase alpha chain from Bacillus anthracis (strain CDC 684 / NRRL 3495).